Here is a 298-residue protein sequence, read N- to C-terminus: Probable endonuclease 4 (298 aa).

Positions 70, 111, 146, 180, 183, 215, 228, 230, and 260 each coordinate Zn(2+).

The protein belongs to the AP endonuclease 2 family. Zn(2+) is required as a cofactor.

The catalysed reaction is Endonucleolytic cleavage to 5'-phosphooligonucleotide end-products.. Endonuclease IV plays a role in DNA repair. It cleaves phosphodiester bonds at apurinic or apyrimidinic (AP) sites, generating a 3'-hydroxyl group and a 5'-terminal sugar phosphate. This chain is Probable endonuclease 4, found in Halalkalibacterium halodurans (strain ATCC BAA-125 / DSM 18197 / FERM 7344 / JCM 9153 / C-125) (Bacillus halodurans).